Here is a 499-residue protein sequence, read N- to C-terminus: Glutamyl-tRNA(Gln) amidotransferase subunit A (499 aa).

Active-site charge relay system residues include Lys-80 and Ser-155. The active-site Acyl-ester intermediate is Ser-179.

This sequence belongs to the amidase family. GatA subfamily. In terms of assembly, heterotrimer of A, B and C subunits.

It carries out the reaction L-glutamyl-tRNA(Gln) + L-glutamine + ATP + H2O = L-glutaminyl-tRNA(Gln) + L-glutamate + ADP + phosphate + H(+). Its function is as follows. Allows the formation of correctly charged Gln-tRNA(Gln) through the transamidation of misacylated Glu-tRNA(Gln) in organisms which lack glutaminyl-tRNA synthetase. The reaction takes place in the presence of glutamine and ATP through an activated gamma-phospho-Glu-tRNA(Gln). This chain is Glutamyl-tRNA(Gln) amidotransferase subunit A, found in Cupriavidus metallidurans (strain ATCC 43123 / DSM 2839 / NBRC 102507 / CH34) (Ralstonia metallidurans).